Reading from the N-terminus, the 137-residue chain is Large ribosomal subunit protein uL16 (137 aa).

Belongs to the universal ribosomal protein uL16 family. As to quaternary structure, part of the 50S ribosomal subunit.

Functionally, binds 23S rRNA and is also seen to make contacts with the A and possibly P site tRNAs. This Mycoplasma capricolum subsp. capricolum (strain California kid / ATCC 27343 / NCTC 10154) protein is Large ribosomal subunit protein uL16.